The sequence spans 527 residues: Putative adhesin P1-like protein MPN_500 (527 aa).

Disordered stretches follow at residues 1-26, 76-148, 248-269, and 468-527; these read MDDI…GSRS, GWRN…LTNY, ASGS…PEQS, and FGTD…VSGH. Over residues 9 to 26 the composition is skewed to low complexity; the sequence is TSAGSSSGTSTNTSGSRS. Residues 82-95 are compositionally biased toward polar residues; the sequence is TTSGSTGNANDTKF. Low complexity predominate over residues 108–117; it reads SSGTNTSAGN. Over residues 128–148 the composition is skewed to polar residues; sequence QNGQVKTSVQEATSGDNLTNY. Over residues 248 to 262 the composition is skewed to low complexity; sequence ASGSGSNTTSSPGIG. Polar residues predominate over residues 468–495; the sequence is FGTDHSTQPQPQSLKTTTPVFGRSSGNL. Residues 500–513 are compositionally biased toward gly residues; sequence SGGGAGGGSSGSGQ.

This sequence belongs to the adhesin P1 family.

This Mycoplasma pneumoniae (strain ATCC 29342 / M129 / Subtype 1) (Mycoplasmoides pneumoniae) protein is Putative adhesin P1-like protein MPN_500.